We begin with the raw amino-acid sequence, 86 residues long: uncharacterized protein (86 aa).

It to C.jejuni CJ0253.

This is an uncharacterized protein from Helicobacter pylori (strain ATCC 700392 / 26695) (Campylobacter pylori).